The following is an 80-amino-acid chain: Metallothionein-like protein type 2 (80 aa).

The protein belongs to the metallothionein superfamily. Type 15 family.

Metallothioneins have a high content of cysteine residues that bind various heavy metals. This is Metallothionein-like protein type 2 (MTI) from Ricinus communis (Castor bean).